The chain runs to 137 residues: Small ribosomal subunit protein uS12 (137 aa).

Positions 1–26 (MPTINQLVTKGRKRKASKTKSPALNQ) are disordered.

Belongs to the universal ribosomal protein uS12 family. As to quaternary structure, part of the 30S ribosomal subunit. Contacts proteins S8 and S17. May interact with IF1 in the 30S initiation complex.

Functionally, with S4 and S5 plays an important role in translational accuracy. Interacts with and stabilizes bases of the 16S rRNA that are involved in tRNA selection in the A site and with the mRNA backbone. Located at the interface of the 30S and 50S subunits, it traverses the body of the 30S subunit contacting proteins on the other side and probably holding the rRNA structure together. The combined cluster of proteins S8, S12 and S17 appears to hold together the shoulder and platform of the 30S subunit. In Mycoplasmopsis pulmonis (strain UAB CTIP) (Mycoplasma pulmonis), this protein is Small ribosomal subunit protein uS12.